The chain runs to 625 residues: MTQYFEIENRDGAARIGKLLLFPEIRTPCALHTAALGDLENPGPIVDAGSLWIADQKELEARIKEIREKTGKGTLIILPHQTYPPAVPAESTGKVEAFTATGDENAEAEGPTGSLLRAEGEVRKSDLYIMEGAGTLENNARRFLETLIDLKNRIPPDTALYAPKLALPENAAMLAYVGIDVMDDTRAEIAAYSDIYLTAAGSFYLDSLVEFPCRCRVCAATTPAELRALPKADRVELLSAHNRDALDAELALVREKIRTGNLREYVEGQCRVRPWLTALLRLGDFEYSYIEEKVPAFRQSQLLADTSEALSRIEVVRFARRIQERYAPPDLDVLLLLPCAARKPYSTSQSHQKFILALGKYRKFVHEVIITSPLGIVPRELELTYPAAHYDTAVTGHWDEEEKAWVSGCLESYLSKHMYKAVVAHVEGAYREICERVAEKLGIDVVYTAGESLASYESLTNLKNTVEAICTSKDFSRKSQNAEKEKKNFIKAVAGYQFGEGAGHLFSEEVGDPLVKGRFPKYQLFAGKKQLATLIPQYGMLALSPEGAELVLKSEKYVVKIDDFVPRGSILAPGVLDAGPEIRPNDEVIVLGKKALCVGRAMMSGREMKESGRGVAVDVRHVKKL.

Residues 556 to 624 enclose the PUA domain; it reads KYVVKIDDFV…VAVDVRHVKK (69 aa).

This sequence belongs to the archaeosine synthase type 1 family. In terms of assembly, forms a robust complex with the archaeosine synthase beta subunit RaSEA. Formation of this complex highly increases lysine transfer activity. The complex likely consists of an alpha(2)beta(2) heterotetrameric structure.

It catalyses the reaction 7-cyano-7-carbaguanosine(15) in tRNA + L-lysine = 7-N-[(5S)-5-amino-5-carboxypentyl]formamidino-7-deazaguanosine(15) in tRNA. Its pathway is tRNA modification; archaeosine-tRNA biosynthesis. In terms of biological role, functions in the biosynthesis of archaeosine, a modified nucleoside present in the dihydrouridine loop (D-loop) of archaeal tRNAs. Catalyzes the addition of L-lysine to the cyano group of 7-cyano-7-deazaguanine (preQ0)-modified tRNAs at position 15, to generate q0kN15-tRNA, a q0N lysine adduct identified as 7-N-[(5S)-5-amino-5-carboxypentyl]formamidino-7-deazaguanosine. This chain is Archaeosine synthase subunit alpha, found in Methanosarcina acetivorans (strain ATCC 35395 / DSM 2834 / JCM 12185 / C2A).